The chain runs to 202 residues: MADS-box transcription factor 33 (202 aa).

Residues Met-1–Gly-61 form the MADS-box domain. The 91-residue stretch at Gln-87–Leu-177 folds into the K-box domain.

As to expression, expressed in seedling roots.

It is found in the nucleus. Probable transcription factor. This chain is MADS-box transcription factor 33 (MADS33), found in Oryza sativa subsp. japonica (Rice).